A 185-amino-acid polypeptide reads, in one-letter code: GTP-dependent dephospho-CoA kinase (185 aa).

GTP-binding residues include Asp50, Val52, Asp73, Lys75, and Glu128.

This sequence belongs to the GTP-dependent DPCK family.

The enzyme catalyses 3'-dephospho-CoA + GTP = GDP + CoA + H(+). It functions in the pathway cofactor biosynthesis; coenzyme A biosynthesis. Functionally, catalyzes the GTP-dependent phosphorylation of the 3'-hydroxyl group of dephosphocoenzyme A to form coenzyme A (CoA). This is GTP-dependent dephospho-CoA kinase from Aeropyrum pernix (strain ATCC 700893 / DSM 11879 / JCM 9820 / NBRC 100138 / K1).